We begin with the raw amino-acid sequence, 309 residues long: Malate dehydrogenase (309 aa).

NAD(+) contacts are provided by residues 9-14 (GAGFVG) and D33. 2 residues coordinate substrate: R82 and R88. NAD(+)-binding positions include N95 and 118–120 (VNN). Residues N120 and R151 each coordinate substrate. The Proton acceptor role is filled by H175.

Belongs to the LDH/MDH superfamily. MDH type 3 family.

The catalysed reaction is (S)-malate + NAD(+) = oxaloacetate + NADH + H(+). Functionally, catalyzes the reversible oxidation of malate to oxaloacetate. This chain is Malate dehydrogenase, found in Chloroflexus aurantiacus (strain ATCC 29364 / DSM 637 / Y-400-fl).